A 511-amino-acid chain; its full sequence is ATP synthase subunit alpha (511 aa).

ATP is bound at residue 170–177; the sequence is GDRQTGKT.

Belongs to the ATPase alpha/beta chains family. F-type ATPases have 2 components, CF(1) - the catalytic core - and CF(0) - the membrane proton channel. CF(1) has five subunits: alpha(3), beta(3), gamma(1), delta(1), epsilon(1). CF(0) has three main subunits: a(1), b(2) and c(9-12). The alpha and beta chains form an alternating ring which encloses part of the gamma chain. CF(1) is attached to CF(0) by a central stalk formed by the gamma and epsilon chains, while a peripheral stalk is formed by the delta and b chains.

It is found in the cell inner membrane. It carries out the reaction ATP + H2O + 4 H(+)(in) = ADP + phosphate + 5 H(+)(out). In terms of biological role, produces ATP from ADP in the presence of a proton gradient across the membrane. The alpha chain is a regulatory subunit. In Granulibacter bethesdensis (strain ATCC BAA-1260 / CGDNIH1), this protein is ATP synthase subunit alpha.